Reading from the N-terminus, the 86-residue chain is Omega-theraphotoxin-Hhn1f 3 (86 aa).

Positions 1–21 (MKSIVFVALFGLALLAVACSA) are cleaved as a signal peptide. A propeptide spanning residues 22 to 50 (SEDAHKELLKEVVRAMVVDKTDAVQAEER) is cleaved from the precursor. 3 cysteine pairs are disulfide-bonded: Cys52–Cys66, Cys59–Cys71, and Cys65–Cys78.

This sequence belongs to the neurotoxin 10 (Hwtx-1) family. 17 (Hntx-9) subfamily. Expressed by the venom gland.

Its subcellular location is the secreted. In terms of biological role, ion channel inhibitor. In Cyriopagopus hainanus (Chinese bird spider), this protein is Omega-theraphotoxin-Hhn1f 3.